The chain runs to 408 residues: Imidazolonepropionase (408 aa).

Fe(3+)-binding residues include H73 and H75. The Zn(2+) site is built by H73 and H75. R82, Y145, and H178 together coordinate 4-imidazolone-5-propanoate. Y145 is a binding site for N-formimidoyl-L-glutamate. H243 is a Fe(3+) binding site. H243 contributes to the Zn(2+) binding site. 4-imidazolone-5-propanoate is bound at residue Q246. Fe(3+) is bound at residue D318. Zn(2+) is bound at residue D318. Positions 320 and 322 each coordinate N-formimidoyl-L-glutamate. S323 is a binding site for 4-imidazolone-5-propanoate.

The protein belongs to the metallo-dependent hydrolases superfamily. HutI family. Zn(2+) serves as cofactor. The cofactor is Fe(3+).

The protein resides in the cytoplasm. The enzyme catalyses 4-imidazolone-5-propanoate + H2O = N-formimidoyl-L-glutamate. The protein operates within amino-acid degradation; L-histidine degradation into L-glutamate; N-formimidoyl-L-glutamate from L-histidine: step 3/3. Its function is as follows. Catalyzes the hydrolytic cleavage of the carbon-nitrogen bond in imidazolone-5-propanoate to yield N-formimidoyl-L-glutamate. It is the third step in the universal histidine degradation pathway. The protein is Imidazolonepropionase of Shewanella sp. (strain MR-4).